A 412-amino-acid polypeptide reads, in one-letter code: Peptidase T (412 aa).

His81 is a Zn(2+) binding site. The active site involves Asp83. Asp144 lines the Zn(2+) pocket. The Proton acceptor role is filled by Glu178. Positions 179, 201, and 383 each coordinate Zn(2+).

The protein belongs to the peptidase M20B family. Zn(2+) is required as a cofactor.

The protein localises to the cytoplasm. The enzyme catalyses Release of the N-terminal residue from a tripeptide.. Its function is as follows. Cleaves the N-terminal amino acid of tripeptides. This Bacillus cereus (strain ZK / E33L) protein is Peptidase T.